The following is a 555-amino-acid chain: Dihydroxy-acid dehydratase (555 aa).

Position 46 (Cys-46) interacts with [2Fe-2S] cluster. Residue Asp-78 coordinates Mg(2+). A [2Fe-2S] cluster-binding site is contributed by Cys-119. The Mg(2+) site is built by Asp-120 and Lys-121. Residue Lys-121 is modified to N6-carboxylysine. Cys-191 contributes to the [2Fe-2S] cluster binding site. Glu-442 is a binding site for Mg(2+). The active-site Proton acceptor is the Ser-468.

Belongs to the IlvD/Edd family. As to quaternary structure, homodimer. Requires [2Fe-2S] cluster as cofactor. It depends on Mg(2+) as a cofactor.

The catalysed reaction is (2R)-2,3-dihydroxy-3-methylbutanoate = 3-methyl-2-oxobutanoate + H2O. It catalyses the reaction (2R,3R)-2,3-dihydroxy-3-methylpentanoate = (S)-3-methyl-2-oxopentanoate + H2O. It functions in the pathway amino-acid biosynthesis; L-isoleucine biosynthesis; L-isoleucine from 2-oxobutanoate: step 3/4. The protein operates within amino-acid biosynthesis; L-valine biosynthesis; L-valine from pyruvate: step 3/4. Functionally, functions in the biosynthesis of branched-chain amino acids. Catalyzes the dehydration of (2R,3R)-2,3-dihydroxy-3-methylpentanoate (2,3-dihydroxy-3-methylvalerate) into 2-oxo-3-methylpentanoate (2-oxo-3-methylvalerate) and of (2R)-2,3-dihydroxy-3-methylbutanoate (2,3-dihydroxyisovalerate) into 2-oxo-3-methylbutanoate (2-oxoisovalerate), the penultimate precursor to L-isoleucine and L-valine, respectively. In Thermus thermophilus (strain ATCC BAA-163 / DSM 7039 / HB27), this protein is Dihydroxy-acid dehydratase.